A 348-amino-acid chain; its full sequence is Protein RecA (348 aa).

64–71 (GPESSGKT) serves as a coordination point for ATP.

This sequence belongs to the RecA family.

Its subcellular location is the cytoplasm. Its function is as follows. Can catalyze the hydrolysis of ATP in the presence of single-stranded DNA, the ATP-dependent uptake of single-stranded DNA by duplex DNA, and the ATP-dependent hybridization of homologous single-stranded DNAs. It interacts with LexA causing its activation and leading to its autocatalytic cleavage. In Blastochloris viridis (Rhodopseudomonas viridis), this protein is Protein RecA.